A 1203-amino-acid polypeptide reads, in one-letter code: Cingulin (1203 aa).

Residues 7-357 (MAEPRGPVDH…VMISSGSTKA (351 aa)) are head. Residues 25–48 (EPVSGAEMGTLRRGGRRPAKDARA) form a disordered region. A ZIM motif is present at residues 48-62 (ASTYGVAVRVQGIAG). The segment at 54–67 (AVRVQGIAGQPFVV) is interaction with TJP1/ZO1. Residues 89-268 (EASGALGSDF…PPSGFSRSRQ (180 aa)) form a disordered region. 6 positions are modified to phosphoserine: Ser96, Ser135, Ser137, Ser140, Ser155, and Ser165. Over residues 166-191 (PGSTIDTAPLSSVDSLINKFDSQLGG) the composition is skewed to polar residues. Over residues 207–231 (EQRKRSKSLDSRLPRDTLEERERQS) the composition is skewed to basic and acidic residues. Phosphoserine occurs at positions 214, 217, 258, 276, 338, and 351. The segment covering 246–267 (GSSKQPSQSQSPSPPSGFSRSR) has biased composition (low complexity). Residues 358–1160 (VAGQGELTRK…SLEKDSWRKA (803 aa)) adopt a coiled-coil conformation. N6-acetyllysine is present on Lys579. Positions 883–903 (ARREVADAQRQAKDWASEAEK) are enriched in basic and acidic residues. Disordered stretches follow at residues 883–908 (ARREVADAQRQAKDWASEAEKTSGGL) and 1160–1181 (ASRSAAESALKHEGLSSDEEFD). Residues 1161-1203 (SRSAAESALKHEGLSSDEEFDSVYDPSSIASLLTESNLQTSSC) form a tail region. 3 positions are modified to phosphoserine: Ser1175, Ser1176, and Ser1182.

It belongs to the cingulin family. In terms of assembly, homodimer. Interacts with TJP1/ZO1 and SPEF1.

The protein resides in the cell junction. It localises to the tight junction. Its function is as follows. Probably plays a role in the formation and regulation of the tight junction (TJ) paracellular permeability barrier. In Papio anubis (Olive baboon), this protein is Cingulin.